A 426-amino-acid polypeptide reads, in one-letter code: Glutamyl-tRNA reductase (426 aa).

Substrate contacts are provided by residues 50 to 53, Ser108, 113 to 115, and Gln119; these read TCNR and EPQ. Cys51 acts as the Nucleophile in catalysis. An NADP(+)-binding site is contributed by 188 to 193; the sequence is GAGEMI.

This sequence belongs to the glutamyl-tRNA reductase family. In terms of assembly, homodimer.

The enzyme catalyses (S)-4-amino-5-oxopentanoate + tRNA(Glu) + NADP(+) = L-glutamyl-tRNA(Glu) + NADPH + H(+). It functions in the pathway porphyrin-containing compound metabolism; protoporphyrin-IX biosynthesis; 5-aminolevulinate from L-glutamyl-tRNA(Glu): step 1/2. Its function is as follows. Catalyzes the NADPH-dependent reduction of glutamyl-tRNA(Glu) to glutamate 1-semialdehyde (GSA). The chain is Glutamyl-tRNA reductase from Polaromonas sp. (strain JS666 / ATCC BAA-500).